The chain runs to 187 residues: Signal peptidase complex catalytic subunit SEC11 (187 aa).

At 1–18 (MLSSLSPYMANPRNTLSQ) the chain is on the cytoplasmic side. A helical; Signal-anchor for type II membrane protein membrane pass occupies residues 19–39 (VLNFGLVLSSAFMVWKALSVI). At 40-187 (TNSASPVVVV…MGLMVMLQRE (148 aa)) the chain is on the lumenal side. Residues Ser-53 and His-92 each act as charge relay system in the active site. A glycan (N-linked (GlcNAc...) asparagine) is linked at Asn-125. Asp-129 functions as the Charge relay system in the catalytic mechanism. Residues 173 to 184 (VLLGFMGLMVML) are C-terminal short (CTS) helix.

Belongs to the peptidase S26B family. Component of the signal peptidase complex (SPC) composed of a catalytic subunit SEC11 and three accessory subunits SPC1, SPC2 and SPC3. The complex induces a local thinning of the ER membrane which is used to measure the length of the signal peptide (SP) h-region of protein substrates. This ensures the selectivity of the complex towards h-regions shorter than 18-20 amino acids. SPC associates with the translocon complex.

It localises to the endoplasmic reticulum membrane. The enzyme catalyses Cleavage of hydrophobic, N-terminal signal or leader sequences from secreted and periplasmic proteins.. Functionally, catalytic component of the signal peptidase complex (SPC) which catalyzes the cleavage of N-terminal signal sequences from nascent proteins as they are translocated into the lumen of the endoplasmic reticulum. Specifically cleaves N-terminal signal peptides that contain a hydrophobic alpha-helix (h-region) shorter than 18-20 amino acids. The protein is Signal peptidase complex catalytic subunit SEC11 (SEC11) of Ajellomyces capsulatus (strain G186AR / H82 / ATCC MYA-2454 / RMSCC 2432) (Darling's disease fungus).